We begin with the raw amino-acid sequence, 308 residues long: ADP-L-glycero-D-manno-heptose-6-epimerase (308 aa).

Residues methionine 10–isoleucine 11, aspartate 31–asparagine 32, lysine 38, lysine 53, glutamate 75–serine 79, and asparagine 92 each bind NADP(+). The active-site Proton acceptor is the tyrosine 140. Residue lysine 144 participates in NADP(+) binding. Asparagine 169 contacts substrate. Valine 170 and lysine 178 together coordinate NADP(+). Lysine 178 (proton acceptor) is an active-site residue. Residues serine 180, histidine 187, phenylalanine 201–serine 204, arginine 209, and tyrosine 272 contribute to the substrate site.

Belongs to the NAD(P)-dependent epimerase/dehydratase family. HldD subfamily. Homopentamer. Requires NADP(+) as cofactor.

It catalyses the reaction ADP-D-glycero-beta-D-manno-heptose = ADP-L-glycero-beta-D-manno-heptose. It functions in the pathway nucleotide-sugar biosynthesis; ADP-L-glycero-beta-D-manno-heptose biosynthesis; ADP-L-glycero-beta-D-manno-heptose from D-glycero-beta-D-manno-heptose 7-phosphate: step 4/4. Its function is as follows. Catalyzes the interconversion between ADP-D-glycero-beta-D-manno-heptose and ADP-L-glycero-beta-D-manno-heptose via an epimerization at carbon 6 of the heptose. The polypeptide is ADP-L-glycero-D-manno-heptose-6-epimerase (Actinobacillus pleuropneumoniae serotype 7 (strain AP76)).